The following is a 542-amino-acid chain: Protein MGF 505-10R (542 aa).

The protein belongs to the asfivirus MGF 505 family.

Its function is as follows. Plays a role in virus cell tropism, and may be required for efficient virus replication in macrophages. The sequence is that of Protein MGF 505-10R from Ornithodoros (relapsing fever ticks).